The sequence spans 151 residues: Large ribosomal subunit protein bL9 (151 aa).

It belongs to the bacterial ribosomal protein bL9 family.

In terms of biological role, binds to the 23S rRNA. The polypeptide is Large ribosomal subunit protein bL9 (Pelodictyon phaeoclathratiforme (strain DSM 5477 / BU-1)).